Consider the following 446-residue polypeptide: tRNA modification GTPase MnmE (446 aa).

Positions 22, 80, and 119 each coordinate (6S)-5-formyl-5,6,7,8-tetrahydrofolate. One can recognise a TrmE-type G domain in the interval Gly-215–Gly-370. Residue Asn-225 coordinates K(+). GTP contacts are provided by residues Asn-225–Thr-230, Thr-244–Thr-250, and Asp-269–Gly-272. Position 229 (Ser-229) interacts with Mg(2+). The K(+) site is built by Thr-244, Ile-246, and Thr-249. Residue Thr-250 coordinates Mg(2+). Residue Lys-446 participates in (6S)-5-formyl-5,6,7,8-tetrahydrofolate binding.

It belongs to the TRAFAC class TrmE-Era-EngA-EngB-Septin-like GTPase superfamily. TrmE GTPase family. In terms of assembly, homodimer. Heterotetramer of two MnmE and two MnmG subunits. It depends on K(+) as a cofactor.

The protein resides in the cytoplasm. Exhibits a very high intrinsic GTPase hydrolysis rate. Involved in the addition of a carboxymethylaminomethyl (cmnm) group at the wobble position (U34) of certain tRNAs, forming tRNA-cmnm(5)s(2)U34. The protein is tRNA modification GTPase MnmE of Legionella pneumophila (strain Corby).